The chain runs to 328 residues: Probable GDP-L-fucose synthase 1 (328 aa).

25 to 31 (GHRGLVG) lines the NADP(+) pocket. The Proton donor/acceptor role is filled by Tyr152. NADP(+) contacts are provided by residues Lys156, 179-182 (PTNL), and His195. Substrate-binding residues include Arg203, Trp218, Arg225, and Asp285.

The protein belongs to the NAD(P)-dependent epimerase/dehydratase family. Fucose synthase subfamily. Homodimer.

It catalyses the reaction GDP-beta-L-fucose + NADP(+) = GDP-4-dehydro-alpha-D-rhamnose + NADPH + H(+). It participates in nucleotide-sugar biosynthesis; GDP-L-fucose biosynthesis via de novo pathway; GDP-L-fucose from GDP-alpha-D-mannose: step 2/2. Functionally, catalyzes the two-step NADP-dependent conversion of GDP-4-dehydro-6-deoxy-D-mannose to GDP-fucose, involving an epimerase and a reductase reaction. This chain is Probable GDP-L-fucose synthase 1, found in Oryza sativa subsp. japonica (Rice).